A 510-amino-acid chain; its full sequence is Maturase K (510 aa).

Belongs to the intron maturase 2 family. MatK subfamily.

The protein resides in the plastid. The protein localises to the chloroplast. In terms of biological role, usually encoded in the trnK tRNA gene intron. Probably assists in splicing its own and other chloroplast group II introns. In Cestrum elegans (Red cestrum), this protein is Maturase K.